The primary structure comprises 232 residues: Ubiquinone biosynthesis O-methyltransferase (232 aa).

Residues R36, G55, D76, and M120 each coordinate S-adenosyl-L-methionine.

The protein belongs to the methyltransferase superfamily. UbiG/COQ3 family.

The catalysed reaction is a 3-demethylubiquinol + S-adenosyl-L-methionine = a ubiquinol + S-adenosyl-L-homocysteine + H(+). The enzyme catalyses a 3-(all-trans-polyprenyl)benzene-1,2-diol + S-adenosyl-L-methionine = a 2-methoxy-6-(all-trans-polyprenyl)phenol + S-adenosyl-L-homocysteine + H(+). The protein operates within cofactor biosynthesis; ubiquinone biosynthesis. Functionally, O-methyltransferase that catalyzes the 2 O-methylation steps in the ubiquinone biosynthetic pathway. The sequence is that of Ubiquinone biosynthesis O-methyltransferase from Paraburkholderia phymatum (strain DSM 17167 / CIP 108236 / LMG 21445 / STM815) (Burkholderia phymatum).